Consider the following 235-residue polypeptide: Enolase-phosphatase E1 (235 aa).

Belongs to the HAD-like hydrolase superfamily. MasA/MtnC family. In terms of assembly, monomer. Mg(2+) is required as a cofactor.

The catalysed reaction is 5-methylsulfanyl-2,3-dioxopentyl phosphate + H2O = 1,2-dihydroxy-5-(methylsulfanyl)pent-1-en-3-one + phosphate. It participates in amino-acid biosynthesis; L-methionine biosynthesis via salvage pathway; L-methionine from S-methyl-5-thio-alpha-D-ribose 1-phosphate: step 3/6. Its pathway is amino-acid biosynthesis; L-methionine biosynthesis via salvage pathway; L-methionine from S-methyl-5-thio-alpha-D-ribose 1-phosphate: step 4/6. In terms of biological role, bifunctional enzyme that catalyzes the enolization of 2,3-diketo-5-methylthiopentyl-1-phosphate (DK-MTP-1-P) into the intermediate 2-hydroxy-3-keto-5-methylthiopentenyl-1-phosphate (HK-MTPenyl-1-P), which is then dephosphorylated to form the acireductone 1,2-dihydroxy-3-keto-5-methylthiopentene (DHK-MTPene). In Parvibaculum lavamentivorans (strain DS-1 / DSM 13023 / NCIMB 13966), this protein is Enolase-phosphatase E1.